We begin with the raw amino-acid sequence, 342 residues long: MFSPIGKVAQPYFCSFLLSTILGFVIAPRTIAALKNIQKGRNPVRSCFPAAHLAKKSGIPSMGGVIILLPCILSTAIFGDLHDRDIWVILTTMVAFAILGGVDDYLKFTRQNPQGISLEAKLFAQLLIASAALIFLSYTSDSFTSTHIFSKGLIDLGWAYMPFAYIVVVGSSNSVNLTDGLDGLATLPIITSTAILGIIGHLSLQFGAEPPGVVGANIPIFCSALVGSALSFLWFNAHPAQVFMGDLGSLSLGASLGLMSVMLKCEFIYAISGCIFVAEAISSMAQVAYCKLTKGRKIFLVAPIHHHFEKAGLKEATIVTRAWVIAMVSFVVSLAAIIYIYR.

10 helical membrane-spanning segments follow: residues 8 to 28 (VAQP…VIAP), 58 to 78 (GIPS…TAIF), 86 to 106 (IWVI…DDYL), 116 to 136 (ISLE…LIFL), 152 to 172 (GLID…VGSS), 184 to 204 (LATL…HLSL), 213 to 233 (VVGA…LSFL), 242 to 262 (VFMG…MSVM), 267 to 287 (FIYA…MAQV), and 318 to 338 (IVTR…AAII).

This sequence belongs to the glycosyltransferase 4 family. MraY subfamily. It depends on Mg(2+) as a cofactor.

It is found in the cell inner membrane. It catalyses the reaction UDP-N-acetyl-alpha-D-muramoyl-L-alanyl-gamma-D-glutamyl-meso-2,6-diaminopimeloyl-D-alanyl-D-alanine + di-trans,octa-cis-undecaprenyl phosphate = di-trans,octa-cis-undecaprenyl diphospho-N-acetyl-alpha-D-muramoyl-L-alanyl-D-glutamyl-meso-2,6-diaminopimeloyl-D-alanyl-D-alanine + UMP. The protein operates within cell wall biogenesis; peptidoglycan biosynthesis. Catalyzes the initial step of the lipid cycle reactions in the biosynthesis of the cell wall peptidoglycan: transfers peptidoglycan precursor phospho-MurNAc-pentapeptide from UDP-MurNAc-pentapeptide onto the lipid carrier undecaprenyl phosphate, yielding undecaprenyl-pyrophosphoryl-MurNAc-pentapeptide, known as lipid I. In Anaplasma marginale (strain Florida), this protein is Phospho-N-acetylmuramoyl-pentapeptide-transferase.